A 421-amino-acid polypeptide reads, in one-letter code: Ribosomal RNA large subunit methyltransferase G (421 aa).

The interval 389–421 is disordered; that stretch reads EPELEQESDLNSKLDANTEVPHPQSALYGKPKA.

This sequence belongs to the methyltransferase superfamily. RlmG family.

It localises to the cytoplasm. It carries out the reaction guanosine(1835) in 23S rRNA + S-adenosyl-L-methionine = N(2)-methylguanosine(1835) in 23S rRNA + S-adenosyl-L-homocysteine + H(+). In terms of biological role, specifically methylates the guanine in position 1835 (m2G1835) of 23S rRNA. The polypeptide is Ribosomal RNA large subunit methyltransferase G (Shewanella halifaxensis (strain HAW-EB4)).